The sequence spans 143 residues: Large ribosomal subunit protein uL15 (143 aa).

The disordered stretch occupies residues 1–52; that stretch reads MKLNTLAPAAGSKSAPKRLGRGIGSGLGKTSGKGHKGQKARSGGYHKVGFEG. Gly residues predominate over residues 21–31; it reads RGIGSGLGKTS.

It belongs to the universal ribosomal protein uL15 family. As to quaternary structure, part of the 50S ribosomal subunit.

In terms of biological role, binds to the 23S rRNA. This Francisella tularensis subsp. mediasiatica (strain FSC147) protein is Large ribosomal subunit protein uL15.